The chain runs to 100 residues: MAKKSMIEREKKRLKFVTKFKQKRYDLKKQIKKAEFLEEKLSLYAKLQKLPRNSSAVRLHNRCLISGRPKGYYRDFGLSRHVLREFGHNCLLPGLTKSSW.

The protein belongs to the universal ribosomal protein uS14 family. In terms of assembly, part of the 30S ribosomal subunit.

It is found in the plastid. It localises to the chloroplast. Binds 16S rRNA, required for the assembly of 30S particles. This is Small ribosomal subunit protein uS14c from Tupiella akineta (Green alga).